The chain runs to 152 residues: Endoribonuclease YbeY (152 aa).

3 residues coordinate Zn(2+): H113, H117, and H123.

Belongs to the endoribonuclease YbeY family. It depends on Zn(2+) as a cofactor.

The protein localises to the cytoplasm. Its function is as follows. Single strand-specific metallo-endoribonuclease involved in late-stage 70S ribosome quality control and in maturation of the 3' terminus of the 16S rRNA. The protein is Endoribonuclease YbeY of Janthinobacterium sp. (strain Marseille) (Minibacterium massiliensis).